The following is a 406-amino-acid chain: Isocitrate dehydrogenase [NADP] (406 aa).

NADP(+) is bound by residues Lys72, Thr75, Thr77, and Arg82. Residues Ser94, Asn96, Arg100, Glu110, and Arg132 each coordinate D-threo-isocitrate. Residues Asp250, Asp273, and Asp277 each coordinate Mn(2+). Positions 308, 309, 310, 313, and 326 each coordinate NADP(+).

It belongs to the isocitrate and isopropylmalate dehydrogenases family. In terms of assembly, homodimer. Mg(2+) is required as a cofactor. Requires Mn(2+) as cofactor.

It catalyses the reaction D-threo-isocitrate + NADP(+) = 2-oxoglutarate + CO2 + NADPH. Functionally, catalyzes the oxidative decarboxylation of isocitrate to 2-oxoglutarate and carbon dioxide with the concomitant reduction of NADP(+). The protein is Isocitrate dehydrogenase [NADP] (icd) of Sphingobium yanoikuyae (Sphingomonas yanoikuyae).